The primary structure comprises 963 residues: Putative RNA Helicase B962L (963 aa).

Positions 43–229 (IPTSLADRVL…FGIGKENIIL (187 aa)) constitute a Helicase ATP-binding domain. 56 to 63 (SRTGSGKS) is a binding site for ATP. Positions 167–170 (DEAH) match the DEAH box motif. One can recognise a Helicase C-terminal domain in the interval 253 to 459 (ACETALTIHK…TIKKNKEGVF (207 aa)). The helical transmembrane segment at 521-541 (GYFWQAAISDIATILAVVSVV) threads the bilayer.

The protein belongs to the DEAD box helicase family. DEAH subfamily.

Its subcellular location is the host membrane. It localises to the virion. The enzyme catalyses ATP + H2O = ADP + phosphate + H(+). This Ornithodoros (relapsing fever ticks) protein is Putative RNA Helicase B962L.